Reading from the N-terminus, the 350-residue chain is SUMO-activating enzyme subunit 1 (350 aa).

M1 is subject to N-acetylmethionine. V2 carries the post-translational modification N-acetylvaline; in SUMO-activating enzyme subunit 1, N-terminally processed. Residue S16 is modified to Phosphoserine. K202 is subject to N6-acetyllysine.

It belongs to the ubiquitin-activating E1 family. In terms of assembly, heterodimer of SAE1 and UBA2/SAE2. The heterodimer corresponds to the two domains that are encoded on a single polypeptide chain in ubiquitin-activating enzyme E1. Interacts with UBE2I. Broadly expressed, with highest levels in testis.

The protein localises to the nucleus. It functions in the pathway protein modification; protein sumoylation. The heterodimer acts as an E1 ligase for SUMO1, SUMO2, SUMO3, and probably SUMO4. It mediates ATP-dependent activation of SUMO proteins followed by formation of a thioester bond between a SUMO protein and a conserved active site cysteine residue on UBA2/SAE2. The sequence is that of SUMO-activating enzyme subunit 1 (Sae1) from Mus musculus (Mouse).